The chain runs to 1376 residues: YLP motif-containing protein 1 (1376 aa).

Disordered regions lie at residues 1–335 (MYPN…PEED) and 511–1058 (STIP…PPGR). Positions 14–27 (YPPPPVPPPPPPVA) are enriched in pro residues. 2 stretches are compositionally biased toward low complexity: residues 31–50 (ASPG…SSSG) and 59–80 (LAQL…LQPH). 5 stretches are compositionally biased toward pro residues: residues 81–93 (HLPP…PPVM), 102–114 (QPPP…PPGP), 148–158 (PESPPVPPGSY), 166–176 (MPPPQPPPSYY), and 184–204 (YLPP…PPSI). Composition is skewed to polar residues over residues 207–216 (GNKTTIQQEP) and 238–260 (STMT…LQQR). The segment covering 261 to 271 (TKVHLPGHKKG) has biased composition (basic residues). The span at 277-286 (DVPEPIKEEA) shows a compositional bias: basic and acidic residues. 4 stretches are compositionally biased toward pro residues: residues 303–320 (PPLP…PPEE), 511–537 (STIP…PGMP), 545–594 (LPPP…PQGM), and 632–641 (PPSPYHPPPQ). A compositionally biased stretch (polar residues) spans 642–671 (SEQGNSKPLNKVFSSEQGLGESSSALSQSV). Position 675 is an N6-methyllysine (Lys-675). Positions 698 to 714 (RGPREQKEQLQKLKDFG) are enriched in basic and acidic residues. Pro residues-rich tracts occupy residues 738–753 (MYPP…PMGK), 773–796 (TRPP…PPVI), and 840–870 (PVLP…PPPV). Residue Lys-886 forms a Glycyl lysine isopeptide (Lys-Gly) (interchain with G-Cter in SUMO2) linkage. 4 stretches are compositionally biased toward basic and acidic residues: residues 896–930 (ITLR…EPYF), 937–1004 (TDHR…DRPP), 1013–1023 (GERRTYPEERM), and 1039–1058 (RVEK…PPGR). Lys-943 participates in a covalent cross-link: Glycyl lysine isopeptide (Lys-Gly) (interchain with G-Cter in SUMO2). The tract at residues 1326 to 1333 (KKRVRWAD) is involved in interaction with PPP1CA.

Interacts with PPP1CA and NCOA5. Forms a complex with ILF2, ILF3, KHDRBS1, RBMX, NCOA5 and PPP1CA. As to expression, high level expression seen in the brain, adipose tissue, heart and kidney, with a low level expression in muscle, spleen and lung (at protein level).

The protein resides in the nucleus. It localises to the nucleus speckle. Plays a role in the reduction of telomerase activity during differentiation of embryonic stem cells by binding to the core promoter of TERT and controlling its down-regulation. In Rattus norvegicus (Rat), this protein is YLP motif-containing protein 1 (Ylpm1).